The following is a 639-amino-acid chain: MPVSDSGFDNSSKTMKDDTIPTEDYEEITKESEMGDATKITSKIDANVIEKKDTDSENNITIAQDDEKVSWLQRVVEFFEVKNDSTDLADHKPENPIRTFKDLQESLRSTYLYNTDLRPVEAKRRTWTWKQYIFFWISGSFNVNTWQISATGLQLGLNWWQTWICIWVGYTFVAFFLILGSKVGNNYHISFPISSRVSFGIYFSIWIVINRVVMACVWNSTLAYIGSQCVQLMLKAIFGTNLNTRIKDTIKNPNLTNFEFMCFMVFWVACLPFLWFPPDKLRHIFALKSAITPFAAFGFLIWTLCKAKGHLALGSLNDNGGAISKTVLAWSVIRAIMSALDNFSTLILNAPDFTRFGKTYKSSVYSQLIALPVCYAIISLIGILSVSAAYTLYGVNYWSPLDILNRYLDNYTSGNRAGVFLISFIFAFDQLGANLSGNSIPAGTDLTALLPKFINIRRGSYICALISLAICPWDLLSSSSKFTTALAAYAVFLSAIAGVISADYFIVRKGYVNIFHCYTDKPGSYYMYNKYGTNWRAVVAYIFGIAPNFAGFLGSVGVSVPIGAMKVYYLNYFVGYLLAALSYCILVYFYPIKGIPGDAKITDRKWLEEWVEVEEFGTEREAFEEYGGVSTGYEKIRYI.

Positions 1-37 (MPVSDSGFDNSSKTMKDDTIPTEDYEEITKESEMGDA) are disordered. The Cytoplasmic portion of the chain corresponds to 1–162 (MPVSDSGFDN…LQLGLNWWQT (162 aa)). Thr54 is subject to Phosphothreonine. A Phosphoserine modification is found at Ser56. A helical transmembrane segment spans residues 163–180 (WICIWVGYTFVAFFLILG). Over 181–200 (SKVGNNYHISFPISSRVSFG) the chain is Extracellular. The chain crosses the membrane as a helical span at residues 201–225 (IYFSIWIVINRVVMACVWNSTLAYI). The Cytoplasmic portion of the chain corresponds to 226-259 (GSQCVQLMLKAIFGTNLNTRIKDTIKNPNLTNFE). Residues 260–276 (FMCFMVFWVACLPFLWF) form a helical membrane-spanning segment. The Extracellular segment spans residues 277-283 (PPDKLRH). A helical membrane pass occupies residues 284 to 305 (IFALKSAITPFAAFGFLIWTLC). At 306 to 367 (KAKGHLALGS…KTYKSSVYSQ (62 aa)) the chain is on the cytoplasmic side. The helical transmembrane segment at 368 to 392 (LIALPVCYAIISLIGILSVSAAYTL) threads the bilayer. The Extracellular portion of the chain corresponds to 393–416 (YGVNYWSPLDILNRYLDNYTSGNR). A helical transmembrane segment spans residues 417–435 (AGVFLISFIFAFDQLGANL). Topologically, residues 436–460 (SGNSIPAGTDLTALLPKFINIRRGS) are cytoplasmic. Residues 461-477 (YICALISLAICPWDLLS) form a helical membrane-spanning segment. The Extracellular segment spans residues 478–483 (SSSKFT). Residues 484 to 507 (TALAAYAVFLSAIAGVISADYFIV) traverse the membrane as a helical segment. Over 508–537 (RKGYVNIFHCYTDKPGSYYMYNKYGTNWRA) the chain is Cytoplasmic. The chain crosses the membrane as a helical span at residues 538–562 (VVAYIFGIAPNFAGFLGSVGVSVPI). The Extracellular segment spans residues 563–572 (GAMKVYYLNY). Residues 573 to 590 (FVGYLLAALSYCILVYFY) traverse the membrane as a helical segment. Over 591-639 (PIKGIPGDAKITDRKWLEEWVEVEEFGTEREAFEEYGGVSTGYEKIRYI) the chain is Cytoplasmic. Lys635 is covalently cross-linked (Glycyl lysine isopeptide (Lys-Gly) (interchain with G-Cter in ubiquitin)).

The protein belongs to the purine-cytosine permease (2.A.39) family.

It localises to the membrane. Its function is as follows. High-affinity transport of uridine. The polypeptide is Uridine permease (FUI1) (Saccharomyces cerevisiae (strain ATCC 204508 / S288c) (Baker's yeast)).